We begin with the raw amino-acid sequence, 335 residues long: Beta-ketoacyl-[acyl-carrier-protein] synthase III (335 aa).

Residues Cys116 and His256 contribute to the active site. Positions Gln257 to Arg261 are ACP-binding. The active site involves Asn286.

The protein belongs to the thiolase-like superfamily. FabH family. As to quaternary structure, homodimer.

It is found in the cytoplasm. It catalyses the reaction malonyl-[ACP] + acetyl-CoA + H(+) = 3-oxobutanoyl-[ACP] + CO2 + CoA. The protein operates within lipid metabolism; fatty acid biosynthesis. Functionally, catalyzes the condensation reaction of fatty acid synthesis by the addition to an acyl acceptor of two carbons from malonyl-ACP. Catalyzes the first condensation reaction which initiates fatty acid synthesis and may therefore play a role in governing the total rate of fatty acid production. Possesses both acetoacetyl-ACP synthase and acetyl transacylase activities. Its substrate specificity determines the biosynthesis of branched-chain and/or straight-chain of fatty acids. In Porphyromonas gingivalis (strain ATCC BAA-308 / W83), this protein is Beta-ketoacyl-[acyl-carrier-protein] synthase III.